Consider the following 166-residue polypeptide: NAD(P)H-quinone oxidoreductase subunit I, chloroplastic (166 aa).

4Fe-4S ferredoxin-type domains lie at 55 to 84 (GRIHFEFDKCIACEVCVRVCPIDLPVVDWK) and 95 to 124 (LNYSIDFGICIFCGNCVEYCPTNCLSMTEE). [4Fe-4S] cluster contacts are provided by cysteine 64, cysteine 67, cysteine 70, cysteine 74, cysteine 104, cysteine 107, cysteine 110, and cysteine 114.

Belongs to the complex I 23 kDa subunit family. In terms of assembly, NDH is composed of at least 16 different subunits, 5 of which are encoded in the nucleus. [4Fe-4S] cluster serves as cofactor.

It localises to the plastid. The protein localises to the chloroplast thylakoid membrane. The catalysed reaction is a plastoquinone + NADH + (n+1) H(+)(in) = a plastoquinol + NAD(+) + n H(+)(out). It catalyses the reaction a plastoquinone + NADPH + (n+1) H(+)(in) = a plastoquinol + NADP(+) + n H(+)(out). In terms of biological role, NDH shuttles electrons from NAD(P)H:plastoquinone, via FMN and iron-sulfur (Fe-S) centers, to quinones in the photosynthetic chain and possibly in a chloroplast respiratory chain. The immediate electron acceptor for the enzyme in this species is believed to be plastoquinone. Couples the redox reaction to proton translocation, and thus conserves the redox energy in a proton gradient. This chain is NAD(P)H-quinone oxidoreductase subunit I, chloroplastic, found in Lasianthaea macrocephala (Lipochaeta macrocephala).